A 423-amino-acid polypeptide reads, in one-letter code: MENPSLRELDHRNIWHPYAAPGVRNRLVTKTDGVFLTLEDGSTVIDAMSSWWSAIHGHGHPRLKAAAQKQIDTMSHVMFGGLTHEPAIKLTHKLLNLTGNSFDHVFYSDSGSVSVEVAIKMALQASKGQGHPERTKLLTWRSGYHGDTFTAMSVCDPENGMHSLWKGTLPEQIFAPAPPVRGSSPQAISEYLRSMELLIDETVSAIIIEPIVQGAGGMRFHDVALIEGVATLCKKHDRFLIVDEIATGFGRTGELFATLSNGLQPDIMCVGKALTGGFMSFAATLCTDKVAQLISTPNGGGALMHGPTFMANPLACAVSHASLEIIETGMWQKQVKRIEAELIAGLSPLQHLPGVADVRVLGAIGVIEMEQNVNVEEATQAALDHGVWIRPFGRLLYVMPPYITTSEQCAQICTALHAAVKGK.

Residue Trp-51 participates in substrate binding. Pyridoxal 5'-phosphate is bound at residue 111-112; sequence GS. Tyr-144 is a substrate binding site. Asp-243 is a pyridoxal 5'-phosphate binding site. Substrate is bound by residues Lys-272 and Gly-306. Residue Lys-272 is modified to N6-(pyridoxal phosphate)lysine. Position 307–308 (307–308) interacts with pyridoxal 5'-phosphate; it reads PT. Arg-390 provides a ligand contact to substrate.

The protein belongs to the class-III pyridoxal-phosphate-dependent aminotransferase family. BioA subfamily. As to quaternary structure, homodimer. It depends on pyridoxal 5'-phosphate as a cofactor.

The protein localises to the cytoplasm. It catalyses the reaction (8S)-8-amino-7-oxononanoate + S-adenosyl-L-methionine = S-adenosyl-4-methylsulfanyl-2-oxobutanoate + (7R,8S)-7,8-diammoniononanoate. Its pathway is cofactor biosynthesis; biotin biosynthesis; 7,8-diaminononanoate from 8-amino-7-oxononanoate (SAM route): step 1/1. Functionally, catalyzes the transfer of the alpha-amino group from S-adenosyl-L-methionine (SAM) to 7-keto-8-aminopelargonic acid (KAPA) to form 7,8-diaminopelargonic acid (DAPA). It is the only aminotransferase known to utilize SAM as an amino donor. This is Adenosylmethionine-8-amino-7-oxononanoate aminotransferase from Corynebacterium glutamicum (strain ATCC 13032 / DSM 20300 / JCM 1318 / BCRC 11384 / CCUG 27702 / LMG 3730 / NBRC 12168 / NCIMB 10025 / NRRL B-2784 / 534).